Reading from the N-terminus, the 209-residue chain is uncharacterized protein (209 aa).

4 consecutive transmembrane segments (helical) span residues 21 to 41, 81 to 101, 107 to 127, and 159 to 179; these read LAYLNVLWILFSLAGLVVFGL, ILGLIVVTAALFLFADMRIAA, VLVNVFVSISLIFAFVVLYVF, and AAGAVGVLCLVLFHVTFLLFF.

The protein localises to the cell membrane. This is an uncharacterized protein from Bacillus subtilis (strain 168).